The chain runs to 571 residues: Dihydroxy-acid dehydratase (571 aa).

Cys-56 is a binding site for [2Fe-2S] cluster. Asp-88 contacts Mg(2+). Residue Cys-129 participates in [2Fe-2S] cluster binding. Mg(2+) contacts are provided by Asp-130 and Lys-131. An N6-carboxylysine modification is found at Lys-131. [2Fe-2S] cluster is bound at residue Cys-201. Glu-452 provides a ligand contact to Mg(2+). Ser-478 functions as the Proton acceptor in the catalytic mechanism.

It belongs to the IlvD/Edd family. As to quaternary structure, homodimer. The cofactor is [2Fe-2S] cluster. Requires Mg(2+) as cofactor.

It catalyses the reaction (2R)-2,3-dihydroxy-3-methylbutanoate = 3-methyl-2-oxobutanoate + H2O. It carries out the reaction (2R,3R)-2,3-dihydroxy-3-methylpentanoate = (S)-3-methyl-2-oxopentanoate + H2O. Its pathway is amino-acid biosynthesis; L-isoleucine biosynthesis; L-isoleucine from 2-oxobutanoate: step 3/4. It participates in amino-acid biosynthesis; L-valine biosynthesis; L-valine from pyruvate: step 3/4. Its function is as follows. Functions in the biosynthesis of branched-chain amino acids. Catalyzes the dehydration of (2R,3R)-2,3-dihydroxy-3-methylpentanoate (2,3-dihydroxy-3-methylvalerate) into 2-oxo-3-methylpentanoate (2-oxo-3-methylvalerate) and of (2R)-2,3-dihydroxy-3-methylbutanoate (2,3-dihydroxyisovalerate) into 2-oxo-3-methylbutanoate (2-oxoisovalerate), the penultimate precursor to L-isoleucine and L-valine, respectively. The polypeptide is Dihydroxy-acid dehydratase (Streptococcus suis (strain 98HAH33)).